Reading from the N-terminus, the 282-residue chain is Bifunctional protein FolD (282 aa).

Residues Gly165–Ser167 and Ser190 each bind NADP(+).

This sequence belongs to the tetrahydrofolate dehydrogenase/cyclohydrolase family. As to quaternary structure, homodimer.

It catalyses the reaction (6R)-5,10-methylene-5,6,7,8-tetrahydrofolate + NADP(+) = (6R)-5,10-methenyltetrahydrofolate + NADPH. It carries out the reaction (6R)-5,10-methenyltetrahydrofolate + H2O = (6R)-10-formyltetrahydrofolate + H(+). It participates in one-carbon metabolism; tetrahydrofolate interconversion. Functionally, catalyzes the oxidation of 5,10-methylenetetrahydrofolate to 5,10-methenyltetrahydrofolate and then the hydrolysis of 5,10-methenyltetrahydrofolate to 10-formyltetrahydrofolate. The chain is Bifunctional protein FolD from Macrococcus caseolyticus (strain JCSC5402) (Macrococcoides caseolyticum).